A 380-amino-acid polypeptide reads, in one-letter code: tRNA(Met) cytidine acetate ligase (380 aa).

ATP-binding positions include 7-20, glycine 101, asparagine 151, and arginine 176; that span reads IAEY…HLYQ.

The protein belongs to the TmcAL family.

The protein resides in the cytoplasm. It catalyses the reaction cytidine(34) in elongator tRNA(Met) + acetate + ATP = N(4)-acetylcytidine(34) in elongator tRNA(Met) + AMP + diphosphate. Its function is as follows. Catalyzes the formation of N(4)-acetylcytidine (ac(4)C) at the wobble position of elongator tRNA(Met), using acetate and ATP as substrates. First activates an acetate ion to form acetyladenylate (Ac-AMP) and then transfers the acetyl group to tRNA to form ac(4)C34. This is tRNA(Met) cytidine acetate ligase from Ligilactobacillus salivarius (strain UCC118) (Lactobacillus salivarius).